The chain runs to 553 residues: Chaperonin GroEL (553 aa).

Residues 30 to 33 (TLGP), Lys-51, 87 to 91 (DGTTT), Gly-415, and Asp-495 contribute to the ATP site.

The protein belongs to the chaperonin (HSP60) family. In terms of assembly, forms a cylinder of 14 subunits composed of two heptameric rings stacked back-to-back. Interacts with the co-chaperonin GroES.

It is found in the cytoplasm. It catalyses the reaction ATP + H2O + a folded polypeptide = ADP + phosphate + an unfolded polypeptide.. Together with its co-chaperonin GroES, plays an essential role in assisting protein folding. The GroEL-GroES system forms a nano-cage that allows encapsulation of the non-native substrate proteins and provides a physical environment optimized to promote and accelerate protein folding. This Buchnera aphidicola subsp. Tuberolachnus salignus protein is Chaperonin GroEL.